The sequence spans 435 residues: AP-2 complex subunit mu (435 aa).

Positions 170 to 434 constitute an MHD domain; it reads RNELFLDVLE…IGRSGIYETR (265 aa). A 1,2-diacyl-sn-glycero-3-phospho-(1D-myo-inositol-3,4,5-trisphosphate) contacts are provided by K341, K345, and K354.

This sequence belongs to the adaptor complexes medium subunit family. In terms of assembly, adaptor protein complex 2 (AP-2) is a heterotetramer composed of two large adaptins (alpha-type subunit and beta-type subunit), a medium adaptin (mu-type subunit) and a small adaptin (sigma-type subunit).

The protein resides in the cell membrane. It localises to the membrane. It is found in the coated pit. Its function is as follows. Component of the adaptor complexes which link clathrin to receptors in coated vesicles. Clathrin-associated protein complexes are believed to interact with the cytoplasmic tails of membrane proteins, leading to their selection and concentration. AP50 is a subunit of the plasma membrane adaptor. The complex binds polyphosphoinositide-containing lipids. This Xenopus laevis (African clawed frog) protein is AP-2 complex subunit mu (ap2m1).